The sequence spans 100 residues: Elevenin-Vc1 (100 aa).

Positions 1–24 (MAPSQKALLVLVLSMLLTASDSWA) are cleaved as a signal peptide. A disulfide bridge links C29 with C38. The propeptide occupies 44–100 (KRGGDSLSVGGSAELDDALTDPFLRSEEPREWRELTRLSRVLQTFLSHPTGETEQHD).

Belongs to the elevenin family. In terms of assembly, monomer. Expressed by the venom duct.

The protein localises to the secreted. In terms of biological role, may mimic the function of prey elevenin neuropeptide. In vivo, intracranial injection in mice induces hyperactivity (tested at 5 and 10 nM). In Conus victoriae (Queen Victoria cone), this protein is Elevenin-Vc1.